Reading from the N-terminus, the 674-residue chain is MNRINILNADTANKIAAGEVVERPSSVVKELVENSLDAGAKNITIEIQNGGESLIKIIDDGSGVHPEDVEKAFNPHATSKIKDTYDIFSINTLGFRGEALPSIASIARVDFKSKTEDFDMGKELIISGGEKESLTDCSMNRGTQIEVRDLFFNVPARKKFLKTTARESALINDLVNRISLANPDVSFKLFNNNKKILNTYGNGKLIDVIRTIYGKSTAENLIYFEEHKDTASVYGFIGNDTLARASRNNQSLFVNKRYVKNRSLTVAVENAFRSFNVTGKFPFFVLFIDTYPELIDVNIHPTKSEIKFKDERFIFKVVFDAVHSAMREYVKDTFTLPEEEEKKFEALKEEVIQESLDKEISTLEKLKENINYKVSEDKKKEEIYSYNPSKDYEAKTEVNIPVDFLSKENQDESFSINNSLENNEFKEVSAKREISYDPILIKNELKDKVSESTSESLERSDYKCNKNEYGNSIEEIIYREAKFPKLRVIGQFNKTYILAEYDSTLYLIDQHAAHEKILFEKYSSDIAKKKVEIQPLMIPLVVTLPTEDYLYYDENKEIFEKAGFKISDFGDNSIRIEEVPYFLDKLNPTELITSMINNLKKMGTGETVEVKYNKIASMSCRAAVKANDVLSILEMENLIEDLRYINDPFHCPHGRPTIIKFTSYELDKKFKRIT.

The protein belongs to the DNA mismatch repair MutL/HexB family.

This protein is involved in the repair of mismatches in DNA. It is required for dam-dependent methyl-directed DNA mismatch repair. May act as a 'molecular matchmaker', a protein that promotes the formation of a stable complex between two or more DNA-binding proteins in an ATP-dependent manner without itself being part of a final effector complex. This chain is DNA mismatch repair protein MutL, found in Clostridium perfringens (strain 13 / Type A).